The following is a 114-amino-acid chain: Large ribosomal subunit protein uL18 (114 aa).

This sequence belongs to the universal ribosomal protein uL18 family. Part of the 50S ribosomal subunit; part of the 5S rRNA/L5/L18/L25 subcomplex. Contacts the 5S and 23S rRNAs.

Functionally, this is one of the proteins that bind and probably mediate the attachment of the 5S RNA into the large ribosomal subunit, where it forms part of the central protuberance. This Bacteroides thetaiotaomicron (strain ATCC 29148 / DSM 2079 / JCM 5827 / CCUG 10774 / NCTC 10582 / VPI-5482 / E50) protein is Large ribosomal subunit protein uL18.